Consider the following 173-residue polypeptide: Crossover junction endodeoxyribonuclease RuvC (173 aa).

Residues Asp-8, Glu-67, and Asp-139 contribute to the active site. Residues Asp-8, Glu-67, and Asp-139 each coordinate Mg(2+).

The protein belongs to the RuvC family. As to quaternary structure, homodimer which binds Holliday junction (HJ) DNA. The HJ becomes 2-fold symmetrical on binding to RuvC with unstacked arms; it has a different conformation from HJ DNA in complex with RuvA. In the full resolvosome a probable DNA-RuvA(4)-RuvB(12)-RuvC(2) complex forms which resolves the HJ. It depends on Mg(2+) as a cofactor.

It localises to the cytoplasm. The catalysed reaction is Endonucleolytic cleavage at a junction such as a reciprocal single-stranded crossover between two homologous DNA duplexes (Holliday junction).. Its function is as follows. The RuvA-RuvB-RuvC complex processes Holliday junction (HJ) DNA during genetic recombination and DNA repair. Endonuclease that resolves HJ intermediates. Cleaves cruciform DNA by making single-stranded nicks across the HJ at symmetrical positions within the homologous arms, yielding a 5'-phosphate and a 3'-hydroxyl group; requires a central core of homology in the junction. The consensus cleavage sequence is 5'-(A/T)TT(C/G)-3'. Cleavage occurs on the 3'-side of the TT dinucleotide at the point of strand exchange. HJ branch migration catalyzed by RuvA-RuvB allows RuvC to scan DNA until it finds its consensus sequence, where it cleaves and resolves the cruciform DNA. The protein is Crossover junction endodeoxyribonuclease RuvC of Shewanella pealeana (strain ATCC 700345 / ANG-SQ1).